A 254-amino-acid chain; its full sequence is tRNA pseudouridine synthase A (254 aa).

Aspartate 52 acts as the Nucleophile in catalysis. A substrate-binding site is contributed by tyrosine 111.

Belongs to the tRNA pseudouridine synthase TruA family. As to quaternary structure, homodimer.

The catalysed reaction is uridine(38/39/40) in tRNA = pseudouridine(38/39/40) in tRNA. Its function is as follows. Formation of pseudouridine at positions 38, 39 and 40 in the anticodon stem and loop of transfer RNAs. In Methylobacterium nodulans (strain LMG 21967 / CNCM I-2342 / ORS 2060), this protein is tRNA pseudouridine synthase A.